The chain runs to 129 residues: MSGRGKQGGKVRAKAKSRSSRAGLQFPVGRVHRLLRKGNYAERVGAGAPVYMAAVLEYLTAEILELAGNAARDNKKTRIIPRHLQLAIRNDEELNKLLGKVTIAQGGVLPNIQAVLLPKKTESHKAKSK.

Residues 1 to 22 (MSGRGKQGGKVRAKAKSRSSRA) form a disordered region. Position 2 is an N-acetylserine (Ser-2). Ser-2 is subject to Phosphoserine. N6-acetyllysine is present on Lys-6. Over residues 7–19 (QGGKVRAKAKSRS) the composition is skewed to basic residues. Position 10 is an N6-lactoyllysine; alternate (Lys-10). Glycyl lysine isopeptide (Lys-Gly) (interchain with G-Cter in ubiquitin) cross-links involve residues Lys-14 and Lys-16. Gln-105 carries the N5-methylglutamine modification. A Glycyl lysine isopeptide (Lys-Gly) (interchain with G-Cter in ubiquitin) cross-link involves residue Lys-120.

The protein belongs to the histone H2A family. The nucleosome is a histone octamer containing two molecules each of H2A, H2B, H3 and H4 assembled in one H3-H4 heterotetramer and two H2A-H2B heterodimers. The octamer wraps approximately 147 bp of DNA. Post-translationally, monoubiquitination of Lys-120 (H2AXK119ub) gives a specific tag for epigenetic transcriptional repression. Following DNA double-strand breaks (DSBs), it is ubiquitinated through 'Lys-63' linkage of ubiquitin moieties. In terms of processing, phosphorylation on Ser-2 is enhanced during mitosis. Phosphorylation on Ser-2 directly represses transcription.

The protein resides in the nucleus. The protein localises to the chromosome. Core component of nucleosome. Nucleosomes wrap and compact DNA into chromatin, limiting DNA accessibility to the cellular machineries which require DNA as a template. Histones thereby play a central role in transcription regulation, DNA repair, DNA replication and chromosomal stability. DNA accessibility is regulated via a complex set of post-translational modifications of histones, also called histone code, and nucleosome remodeling. This Gallus gallus (Chicken) protein is Histone H2A.J (H2A-IX).